We begin with the raw amino-acid sequence, 94 residues long: Non-specific lipid-transfer protein C4 (94 aa).

The N-terminal stretch at 1–26 (MAASKGNAAAAACALVLVLLAVGAEA) is a signal peptide. 4 disulfide bridges follow: Cys34–Cys72, Cys44–Cys59, Cys60–Cys85, and Cys70–Cys92. A glycan (N-linked (GlcNAc...) asparagine) is linked at Asn91.

Belongs to the plant LTP family.

Its function is as follows. Lipid-transfer protein that may be regulated by the transcription factor UDT1 in developing anthers and play a role in tapetum development. The chain is Non-specific lipid-transfer protein C4 from Oryza sativa subsp. japonica (Rice).